A 358-amino-acid polypeptide reads, in one-letter code: Protein-glutamate methylesterase/protein-glutamine glutaminase 2 (358 aa).

The region spanning 8–125 (RVLIVDDSAV…ARGLEGYAEE (118 aa)) is the Response regulatory domain. Asp59 carries the 4-aspartylphosphate modification. Residues 157–352 (PMPGSALRFR…LDRVAERLLA (196 aa)) form the CheB-type methylesterase domain. Catalysis depends on residues Ser177, His203, and Asp299.

Belongs to the CheB family. Post-translationally, phosphorylated by CheA. Phosphorylation of the N-terminal regulatory domain activates the methylesterase activity.

Its subcellular location is the cytoplasm. It carries out the reaction [protein]-L-glutamate 5-O-methyl ester + H2O = L-glutamyl-[protein] + methanol + H(+). It catalyses the reaction L-glutaminyl-[protein] + H2O = L-glutamyl-[protein] + NH4(+). Involved in chemotaxis. Part of a chemotaxis signal transduction system that modulates chemotaxis in response to various stimuli. Catalyzes the demethylation of specific methylglutamate residues introduced into the chemoreceptors (methyl-accepting chemotaxis proteins or MCP) by CheR. Also mediates the irreversible deamidation of specific glutamine residues to glutamic acid. The protein is Protein-glutamate methylesterase/protein-glutamine glutaminase 2 of Xanthomonas oryzae pv. oryzae (strain MAFF 311018).